A 358-amino-acid chain; its full sequence is MEAPGLAQAAAAESDSRKVAEETPDGAPALCPSPEALSPEPPVYSLQDFDTLATVGTGTFGRVHLVKEKTAKHFFALKVMSIPDVIRLKQEQHVHNEKSVLKEVSHPFLIRLFWTWHDERFLYMLMEYVPGGELFSYLRNRGRFSSTTGLFYSAEIICAIEYLHSKEIVYRDLKPENILLDRDGHIKLTDFGFAKKLVDRTWTLCGTPEYLAPEVIQSKGHGRAVDWWALGILIFEMLSGFPPFFDDNPFGIYQKILAGKIDFPRHLDFHVKDLIKKLLVVDRTRRLGNMKNGANDVKHHRWFRSVDWEAVPQRKLKPPIVPKIAGDGDTSNFETYPENDWDTAAPVPQKDLEIFKNF.

The residue at position 1 (Met-1) is an N-acetylmethionine. Residues 1–34 (MEAPGLAQAAAAESDSRKVAEETPDGAPALCPSP) form a disordered region. The 255-residue stretch at 49–303 (FDTLATVGTG…ANDVKHHRWF (255 aa)) folds into the Protein kinase domain. Residues 55–63 (VGTGTFGRV) and Lys-78 each bind ATP. Asp-172 functions as the Proton acceptor in the catalytic mechanism. Thr-203 is modified (phosphothreonine). The 55-residue stretch at 304 to 358 (RSVDWEAVPQRKLKPPIVPKIAGDGDTSNFETYPENDWDTAAPVPQKDLEIFKNF) folds into the AGC-kinase C-terminal domain.

Belongs to the protein kinase superfamily. AGC Ser/Thr protein kinase family. cAMP subfamily. In terms of assembly, like other cAMP-dependent protein kinases, the inactive holoenzyme is probably composed of 2 PRKX catalytic subunits and a dimer of regulatory subunits. Interacts (cAMP-dependent) specifically with the regulatory subunits PRKAR1A and PRKAR1B. Compared to other cAMP-dependent serine/threonine protein kinases, does not interact with the 2 other PKA regulatory subunits PRKAR2A and PRKAR2B. Interacts with cAMP-dependent protein kinase inhibitor/PKI proteins; inhibits PRKX. Interacts with GPKOW. Interacts with SMAD6. Interacts with PKD1; involved in differentiation and controlled morphogenesis of the kidney. Interacts with PIN1 (via WW domain). Phosphorylated; autophosphorylates in vitro. As to expression, widely expressed (at protein level). Specifically expressed in blood by macrophages and granulocytes according to PubMed:9860982.

The protein localises to the cytoplasm. The protein resides in the nucleus. It catalyses the reaction L-seryl-[protein] + ATP = O-phospho-L-seryl-[protein] + ADP + H(+). The catalysed reaction is L-threonyl-[protein] + ATP = O-phospho-L-threonyl-[protein] + ADP + H(+). Its activity is regulated as follows. Binding of cAMP to the PRKAR1A or PRKAR1B regulatory subunits induces dissociation of the holoenzyme heterotetramer. The released monomeric PRKX is then active and able to phosphorylate its substrates. In terms of biological role, serine/threonine protein kinase regulated by and mediating cAMP signaling in cells. Acts through phosphorylation of downstream targets that may include CREB, SMAD6 and PKD1 and has multiple functions in cellular differentiation and epithelial morphogenesis. Regulates myeloid cell differentiation through SMAD6 phosphorylation. Involved in nephrogenesis by stimulating renal epithelial cell migration and tubulogenesis. Also involved in angiogenesis through stimulation of endothelial cell proliferation, migration and vascular-like structure formation. The sequence is that of cAMP-dependent protein kinase catalytic subunit PRKX (PRKX) from Homo sapiens (Human).